The chain runs to 276 residues: Large ribosomal subunit protein uL2 (276 aa).

Disordered stretches follow at residues 26-45 (RSTP…GRNC) and 224-276 (AMNP…RGQK). Positions 259–276 (RDKKKASSKLIIKRRGQK) are enriched in basic residues.

Belongs to the universal ribosomal protein uL2 family. Part of the 50S ribosomal subunit. Forms a bridge to the 30S subunit in the 70S ribosome.

Functionally, one of the primary rRNA binding proteins. Required for association of the 30S and 50S subunits to form the 70S ribosome, for tRNA binding and peptide bond formation. It has been suggested to have peptidyltransferase activity; this is somewhat controversial. Makes several contacts with the 16S rRNA in the 70S ribosome. In Oleidesulfovibrio alaskensis (strain ATCC BAA-1058 / DSM 17464 / G20) (Desulfovibrio alaskensis), this protein is Large ribosomal subunit protein uL2.